Consider the following 500-residue polypeptide: Na(+)/H(+) antiporter NhaB (500 aa).

12 helical membrane-spanning segments follow: residues 28 to 50 (FLLL…VLVG), 68 to 88 (GGLL…ALYA), 98 to 118 (LLLM…LLLF), 121 to 141 (LLLG…LAAL), 145 to 165 (FLDA…FFAV), 205 to 225 (LLMH…VGEP), 244 to 264 (QVAP…VLLE), 311 to 331 (VLIV…LLVI), 350 to 370 (FQEA…VAVI), 394 to 414 (MLFI…VATI), 449 to 469 (VATP…IAPL), and 477 to 497 (MVWM…WAVS).

It belongs to the NhaB Na(+)/H(+) (TC 2.A.34) antiporter family.

It localises to the cell inner membrane. It carries out the reaction 2 Na(+)(in) + 3 H(+)(out) = 2 Na(+)(out) + 3 H(+)(in). Functionally, na(+)/H(+) antiporter that extrudes sodium in exchange for external protons. In Pseudomonas aeruginosa (strain UCBPP-PA14), this protein is Na(+)/H(+) antiporter NhaB.